We begin with the raw amino-acid sequence, 60 residues long: Short neurotoxin 1 (60 aa).

4 disulfide bridges follow: Cys-3–Cys-22, Cys-17–Cys-39, Cys-41–Cys-52, and Cys-53–Cys-58.

This sequence belongs to the three-finger toxin family. Short-chain subfamily. Type I alpha-neurotoxin sub-subfamily. Expressed by the venom gland.

The protein localises to the secreted. In terms of biological role, binds to muscle nicotinic acetylcholine receptor (nAChR) and inhibit acetylcholine from binding to the receptor, thereby impairing neuromuscular transmission. This is Short neurotoxin 1 from Dendroaspis jamesoni kaimosae (Eastern Jameson's mamba).